Consider the following 457-residue polypeptide: Ribulose bisphosphate carboxylase large chain (457 aa).

Positions 1 to 2 (MS) are excised as a propeptide. Pro3 is subject to N-acetylproline. Lys14 is subject to N6,N6,N6-trimethyllysine. Residues Asn123 and Thr173 each coordinate substrate. The Proton acceptor role is filled by Lys175. Lys177 provides a ligand contact to substrate. Mg(2+) is bound by residues Lys201, Asp203, and Glu204. Lys201 carries the N6-carboxylysine modification. His294 acts as the Proton acceptor in catalysis. Arg295, His327, and Ser379 together coordinate substrate.

It belongs to the RuBisCO large chain family. Type I subfamily. As to quaternary structure, heterohexadecamer of 8 large chains and 8 small chains; disulfide-linked. The disulfide link is formed within the large subunit homodimers. It depends on Mg(2+) as a cofactor. Post-translationally, the disulfide bond which can form in the large chain dimeric partners within the hexadecamer appears to be associated with oxidative stress and protein turnover.

The protein resides in the plastid. The protein localises to the chloroplast. The enzyme catalyses 2 (2R)-3-phosphoglycerate + 2 H(+) = D-ribulose 1,5-bisphosphate + CO2 + H2O. It catalyses the reaction D-ribulose 1,5-bisphosphate + O2 = 2-phosphoglycolate + (2R)-3-phosphoglycerate + 2 H(+). RuBisCO catalyzes two reactions: the carboxylation of D-ribulose 1,5-bisphosphate, the primary event in carbon dioxide fixation, as well as the oxidative fragmentation of the pentose substrate in the photorespiration process. Both reactions occur simultaneously and in competition at the same active site. The sequence is that of Ribulose bisphosphate carboxylase large chain from Phelline comosa.